The following is a 392-amino-acid chain: Putative cystathionine gamma-lyase 2 (392 aa).

The disordered stretch occupies residues 32-55; it reads LSSTYKQDNPGEPKGHDYSRAGNP. Basic and acidic residues predominate over residues 40–50; that stretch reads NPGEPKGHDYS. Arg-51, Tyr-103, and Arg-108 together coordinate substrate. Residue Lys-203 is modified to N6-(pyridoxal phosphate)lysine. Glu-330 contributes to the substrate binding site.

It belongs to the trans-sulfuration enzymes family. Requires pyridoxal 5'-phosphate as cofactor.

The protein localises to the cytoplasm. It catalyses the reaction L,L-cystathionine + H2O = 2-oxobutanoate + L-cysteine + NH4(+). It functions in the pathway amino-acid biosynthesis; L-cysteine biosynthesis; L-cysteine from L-homocysteine and L-serine: step 2/2. This chain is Putative cystathionine gamma-lyase 2 (cth-2), found in Caenorhabditis elegans.